Reading from the N-terminus, the 202-residue chain is Probable nicotinate-nucleotide adenylyltransferase (202 aa).

This sequence belongs to the NadD family.

The catalysed reaction is nicotinate beta-D-ribonucleotide + ATP + H(+) = deamido-NAD(+) + diphosphate. It functions in the pathway cofactor biosynthesis; NAD(+) biosynthesis; deamido-NAD(+) from nicotinate D-ribonucleotide: step 1/1. Functionally, catalyzes the reversible adenylation of nicotinate mononucleotide (NaMN) to nicotinic acid adenine dinucleotide (NaAD). The protein is Probable nicotinate-nucleotide adenylyltransferase of Clostridium perfringens (strain ATCC 13124 / DSM 756 / JCM 1290 / NCIMB 6125 / NCTC 8237 / Type A).